The sequence spans 359 residues: S-adenosylmethionine:tRNA ribosyltransferase-isomerase (359 aa).

The protein belongs to the QueA family. As to quaternary structure, monomer.

The protein localises to the cytoplasm. It catalyses the reaction 7-aminomethyl-7-carbaguanosine(34) in tRNA + S-adenosyl-L-methionine = epoxyqueuosine(34) in tRNA + adenine + L-methionine + 2 H(+). Its pathway is tRNA modification; tRNA-queuosine biosynthesis. Functionally, transfers and isomerizes the ribose moiety from AdoMet to the 7-aminomethyl group of 7-deazaguanine (preQ1-tRNA) to give epoxyqueuosine (oQ-tRNA). This Colwellia psychrerythraea (strain 34H / ATCC BAA-681) (Vibrio psychroerythus) protein is S-adenosylmethionine:tRNA ribosyltransferase-isomerase.